The primary structure comprises 125 residues: Holo-[acyl-carrier-protein] synthase (125 aa).

Residues Asp-8 and Glu-57 each coordinate Mg(2+).

This sequence belongs to the P-Pant transferase superfamily. AcpS family. Mg(2+) serves as cofactor.

The protein localises to the cytoplasm. It carries out the reaction apo-[ACP] + CoA = holo-[ACP] + adenosine 3',5'-bisphosphate + H(+). Transfers the 4'-phosphopantetheine moiety from coenzyme A to a Ser of acyl-carrier-protein. The protein is Holo-[acyl-carrier-protein] synthase of Azoarcus sp. (strain BH72).